The chain runs to 234 residues: Large ribosomal subunit protein uL1 (234 aa).

The protein belongs to the universal ribosomal protein uL1 family. Part of the 50S ribosomal subunit.

In terms of biological role, binds directly to 23S rRNA. The L1 stalk is quite mobile in the ribosome, and is involved in E site tRNA release. Protein L1 is also a translational repressor protein, it controls the translation of the L11 operon by binding to its mRNA. This Yersinia enterocolitica serotype O:8 / biotype 1B (strain NCTC 13174 / 8081) protein is Large ribosomal subunit protein uL1.